Reading from the N-terminus, the 213-residue chain is Nucleoside triphosphate pyrophosphatase (213 aa).

D79 acts as the Proton acceptor in catalysis.

This sequence belongs to the Maf family. A divalent metal cation serves as cofactor.

The protein localises to the cytoplasm. The enzyme catalyses a ribonucleoside 5'-triphosphate + H2O = a ribonucleoside 5'-phosphate + diphosphate + H(+). The catalysed reaction is a 2'-deoxyribonucleoside 5'-triphosphate + H2O = a 2'-deoxyribonucleoside 5'-phosphate + diphosphate + H(+). Its function is as follows. Nucleoside triphosphate pyrophosphatase. May have a dual role in cell division arrest and in preventing the incorporation of modified nucleotides into cellular nucleic acids. The chain is Nucleoside triphosphate pyrophosphatase from Rhodococcus erythropolis (strain PR4 / NBRC 100887).